The sequence spans 80 residues: Conotoxin SmIVA (80 aa).

The N-terminal stretch at 1–21 (MGMRMMFTVFLLVVLATTVVS) is a signal peptide. A propeptide spanning residues 22–38 (IPSDRASDGRNAAVNER) is cleaved from the precursor. Q39 is subject to Pyrrolidone carboxylic acid. S45 carries an O-linked (HexNAc...) serine glycan. 4 positions are modified to 4-hydroxyproline: P55, P60, P70, and P72. S75 is subject to Serine amide. A propeptide spanning residues 76–80 (GRRND) is cleaved from the precursor.

The protein belongs to the conotoxin A superfamily. Post-translationally, contains 3 disulfide bonds. As to expression, expressed by the venom duct.

Its subcellular location is the secreted. Functionally, neurotoxin with probable activity on sodium channel. Induces intense repetitive firing of the frog neuromuscular junction, leading to a tetanic contracture in muscle fiber (spastic paralysis). In vivo, shows the same effect as the whole venom when injected on fish prey. The chain is Conotoxin SmIVA from Conus stercusmuscarum (Fly-specked cone).